The primary structure comprises 361 residues: 5-formaminoimidazole-4-carboxamide-1-(beta)-D-ribofuranosyl 5'-monophosphate synthetase (361 aa).

Histidine 27 and serine 94 together coordinate 5-amino-1-(5-phospho-beta-D-ribosyl)imidazole-4-carboxamide. The region spanning 116–348 is the ATP-grasp domain; it reads RAILRWEAER…MGQRIAKEIK (233 aa). ATP is bound by residues 146 to 208 and glutamate 230; that span reads PDEI…ANYC. Asparagine 258 is a 5-amino-1-(5-phospho-beta-D-ribosyl)imidazole-4-carboxamide binding site. Residues glutamine 297 and glutamate 310 each coordinate Mg(2+).

It belongs to the phosphohexose mutase family. Mg(2+) is required as a cofactor. The cofactor is Mn(2+).

It carries out the reaction 5-amino-1-(5-phospho-beta-D-ribosyl)imidazole-4-carboxamide + formate + ATP = 5-formamido-1-(5-phospho-D-ribosyl)imidazole-4-carboxamide + ADP + phosphate. It participates in purine metabolism; IMP biosynthesis via de novo pathway; 5-formamido-1-(5-phospho-D-ribosyl)imidazole-4-carboxamide from 5-amino-1-(5-phospho-D-ribosyl)imidazole-4-carboxamide (formate route): step 1/1. In terms of biological role, catalyzes the ATP- and formate-dependent formylation of 5-aminoimidazole-4-carboxamide-1-beta-d-ribofuranosyl 5'-monophosphate (AICAR) to 5-formaminoimidazole-4-carboxamide-1-beta-d-ribofuranosyl 5'-monophosphate (FAICAR) in the absence of folates. In Methanococcus maripaludis (strain DSM 14266 / JCM 13030 / NBRC 101832 / S2 / LL), this protein is 5-formaminoimidazole-4-carboxamide-1-(beta)-D-ribofuranosyl 5'-monophosphate synthetase.